The following is a 427-amino-acid chain: Piwi protein (427 aa).

Residues 38–167 form a mid domain region; sequence PYEVPSLKYN…VQFVSKLGGK (130 aa). The Piwi domain occupies 110 to 406; the sequence is GIMLVLPEYN…VAGIIANVNR (297 aa). A binds 5'-phosphorylated end of guide DNA region spans residues 118 to 124; it reads YNTPLYY. The interval 147–148 is binds target DNA; that stretch reads RN. The segment at 150-155 is binds guide DNA; the sequence is TFYVDN. A divalent metal cation-binding residues include Q159 and L427. Residues 168-427 are PIWI domain; the sequence is PWILNVDPEK…RSLQTNPWFL (260 aa).

Belongs to the argonaute family. Short pAgo subfamily. As to quaternary structure, homodimer probably stabilized by DNA. Each subunit is capable of interacting with a DNA molecule. A divalent metal cation serves as cofactor.

Might play a role in defense against invading genetic elements, using short nucleic acid sequences as guides to bind complementary target strands, resulting in slicing of the target nucleic acid. Binds nucleic acids with decreasing affinity in the following order; ssDNA, ssRNA, dsDNA, RNA-DNA, RNA-RNA. Association of the 5' seed region of the guide strand (nucleotides 2-7) with AfPiwi increases affinity for the corresponding target strand; the greatest increase in affinity is for guide DNA with target RNA. This is Piwi protein from Archaeoglobus fulgidus (strain ATCC 49558 / DSM 4304 / JCM 9628 / NBRC 100126 / VC-16).